The following is a 444-amino-acid chain: Sprouty-related, EVH1 domain-containing protein 1 (444 aa).

Ser2 is subject to N-acetylserine. Residues 6 to 123 (ATSDNDNSYA…RGIRRAIEDI (118 aa)) form the WH1 domain. Position 225 is an N6-methyllysine (Lys225). Residues 234–286 (SIRHVSFQDEDEIVRINPRDILIRRYADYRHPDMWKNDLERDDTDSSVPFSKQ) enclose the KBD domain. At Ser239 the chain carries Phosphoserine. The interval 268–287 (WKNDLERDDTDSSVPFSKQD) is disordered. The residue at position 309 (Ser309) is a Phosphoserine. Residues 333–444 (SRCVYCQERF…CCGGKHKAAG (112 aa)) form a required for interaction with TESK1 region. In terms of domain architecture, SPR spans 334-442 (RCVYCQERFN…CGCCGGKHKA (109 aa)).

Homodimer and heterodimer. Able to interact with SPRED2 to form heterodimers. Interacts (via C-terminus) with TAOK1/MARKK (via C-terminus); the interaction does not affect TAOK1 kinase activity. Interacts (via C-terminus) with TESK1 (via C-terminus); the interaction inhibits TESK1 kinase activity. Interacts with CAV1. Interacts with RAS. Interacts with palmitoyltransferase ZDHHC17/HIP14; the interaction leads to palmitoylation of SPRED1. Palmitoylated by ZDHHC17/HIP14. In terms of processing, ubiquitinated. Post-translationally, phosphorylated on tyrosine. In terms of tissue distribution, expressed in brain. Weakly expressed in lung, heart, liver, kidney, intestine, spleen, testis, thymus, colon and ovary. Also expressed in embryonic tissues such as heart, lung, liver and brain. Highly expressed in IL3-dependent hematopoietic cell lines (Ba/F3 and MC/9) and bone marrow-derived mast cells (BMMC).

The protein localises to the cell membrane. It is found in the membrane. The protein resides in the caveola. Its subcellular location is the nucleus. Its function is as follows. Tyrosine kinase substrate that inhibits growth-factor-mediated activation of MAP kinase. Negatively regulates hematopoiesis of bone marrow. Inhibits fibroblast growth factor (FGF)-induced retinal lens fiber differentiation, probably by inhibiting FGF-mediated phosphorylation of ERK1/2. Attenuates actin stress fiber formation via inhibition of TESK1-mediated phosphorylation of cofilin. Inhibits TGFB-induced epithelial-to-mesenchymal transition in lens epithelial cells. This chain is Sprouty-related, EVH1 domain-containing protein 1 (Spred1), found in Mus musculus (Mouse).